Consider the following 535-residue polypeptide: Peptide chain release factor 3 (535 aa).

The tr-type G domain occupies Lys8–Gly277. GTP contacts are provided by residues Ser17–Thr24, Asp85–His89, and Asn139–Asp142.

The protein belongs to the TRAFAC class translation factor GTPase superfamily. Classic translation factor GTPase family. PrfC subfamily.

The protein resides in the cytoplasm. Its function is as follows. Increases the formation of ribosomal termination complexes and stimulates activities of RF-1 and RF-2. It binds guanine nucleotides and has strong preference for UGA stop codons. It may interact directly with the ribosome. The stimulation of RF-1 and RF-2 is significantly reduced by GTP and GDP, but not by GMP. The protein is Peptide chain release factor 3 of Nitrosomonas eutropha (strain DSM 101675 / C91 / Nm57).